Reading from the N-terminus, the 296-residue chain is MGPTASGKTALALELAEKHNCEIISVDSALIYRGMDIGSAKPSVDELARGPHRLIDIRDPRESYSAADFRADAIAEIEQIVSMGKTPVLVGGTMMYFKALLEGLSPLPSADEAIRAEIQAEADEKGWEALHDQLRDIDPVSAERIHPNDPQRLSRALEVYRISGKSMTELTQTKSAPLPYDVVQFAIAPRERKVLHDLIAQRFAIMLKQGFLEEVTELKARGDLHLDLPSMRCVGYRQCWQYLDGEFDYDTMVEKAVAATRQLAKRQLTWLRSWPELNWLESGAEGNLVTLMRQCR.

Residue 2–9 coordinates ATP; the sequence is GPTASGKT. A substrate-binding site is contributed by 4 to 9; it reads TASGKT. Interaction with substrate tRNA regions lie at residues 27–30, 151–155, and 232–237; these read DSAL, QRLSR, and RCVGYR.

This sequence belongs to the IPP transferase family. In terms of assembly, monomer. It depends on Mg(2+) as a cofactor.

The enzyme catalyses adenosine(37) in tRNA + dimethylallyl diphosphate = N(6)-dimethylallyladenosine(37) in tRNA + diphosphate. Functionally, catalyzes the transfer of a dimethylallyl group onto the adenine at position 37 in tRNAs that read codons beginning with uridine, leading to the formation of N6-(dimethylallyl)adenosine (i(6)A). This is tRNA dimethylallyltransferase from Shewanella baltica (strain OS155 / ATCC BAA-1091).